The sequence spans 528 residues: Abrin-d (528 aa).

The residue at position 1 (glutamine 1) is a Pyrrolidone carboxylic acid. Glutamate 164 is a catalytic residue. Asparagine 200 carries N-linked (GlcNAc...) asparagine glycosylation. 3 disulfides stabilise this stretch: cysteine 247-cysteine 269, cysteine 286-cysteine 305, and cysteine 329-cysteine 346. Residues 273 to 400 form the Ricin B-type lectin 1 domain; that stretch reads YEPTVRIGGR…YLMRQGWRTG (128 aa). One copy of the 1-alpha repeat lies at 283–325; it reads DGMCVDVYDDGYHNGNRIIAWKCKDRLEENQLWTLKSDLTIRS. One copy of the 1-beta repeat lies at 326–366; the sequence is NGKCLTTEGYAPGNYVMIYDCTSAVAEATYWEIWDNGTIIN. Residues asparagine 361 and asparagine 401 are each glycosylated (N-linked (GlcNAc...) asparagine). The 1-gamma repeat unit spans residues 369-401; the sequence is SALVLSAESSSMGGTLTVQTNEYLMRQGWRTGN. The region spanning 403–527 is the Ricin B-type lectin 2 domain; the sequence is TSPFVTSISG…GKPNQIWLTL (125 aa). One copy of the 2-alpha repeat lies at 414–449; sequence SDLCMQAQGSNVWLADCDNNKKEQQWALYTDGSIRS. Disulfide bonds link cysteine 417–cysteine 430 and cysteine 456–cysteine 473. One copy of the 2-beta repeat lies at 453-492; it reads TNNCLTSKDHKQGSPIVLMACSNGWASQRWLFKNDGSIYS. A 2-gamma repeat occupies 495-528; it reads DDMVMDVKGSDPSLKQIILWPYTGKPNQIWLTLF.

In the N-terminal section; belongs to the ribosome-inactivating protein family. Type 2 RIP subfamily. As to quaternary structure, disulfide-linked dimer of A and B chains.

It catalyses the reaction Endohydrolysis of the N-glycosidic bond at one specific adenosine on the 28S rRNA.. The A chain is responsible for inhibiting protein synthesis through the catalytic inactivation of 60S ribosomal subunits by removing adenine from position 4,324 of 28S rRNA. In terms of biological role, the B chain is a galactose-specific lectin that facilitates the binding of abrin to the cell membrane that precedes endocytosis. This is Abrin-d from Abrus precatorius (Indian licorice).